The sequence spans 391 residues: Chaperone protein DnaJ (391 aa).

The J domain occupies 6–70 (DYYEILEVSR…EKRKLYDTYG (65 aa)). The CR-type zinc-finger motif lies at 145–226 (GCIKNVKYTR…CKSRRMVDEV (82 aa)). Residues Cys-158, Cys-161, Cys-174, Cys-177, Cys-200, Cys-203, Cys-214, and Cys-217 each coordinate Zn(2+). 4 CXXCXGXG motif repeats span residues 158 to 165 (CPDCNGSG), 174 to 181 (CSDCNGEG), 200 to 207 (CPSCKGEG), and 214 to 221 (CKKCKSRR).

This sequence belongs to the DnaJ family. As to quaternary structure, homodimer. Zn(2+) is required as a cofactor.

The protein localises to the cytoplasm. Functionally, participates actively in the response to hyperosmotic and heat shock by preventing the aggregation of stress-denatured proteins and by disaggregating proteins, also in an autonomous, DnaK-independent fashion. Unfolded proteins bind initially to DnaJ; upon interaction with the DnaJ-bound protein, DnaK hydrolyzes its bound ATP, resulting in the formation of a stable complex. GrpE releases ADP from DnaK; ATP binding to DnaK triggers the release of the substrate protein, thus completing the reaction cycle. Several rounds of ATP-dependent interactions between DnaJ, DnaK and GrpE are required for fully efficient folding. Also involved, together with DnaK and GrpE, in the DNA replication of plasmids through activation of initiation proteins. This Mycoplasmoides gallisepticum (strain R(low / passage 15 / clone 2)) (Mycoplasma gallisepticum) protein is Chaperone protein DnaJ.